The chain runs to 373 residues: ATP phosphoribosyltransferase regulatory subunit (373 aa).

The protein belongs to the class-II aminoacyl-tRNA synthetase family. HisZ subfamily. Heteromultimer composed of HisG and HisZ subunits.

It is found in the cytoplasm. Its pathway is amino-acid biosynthesis; L-histidine biosynthesis; L-histidine from 5-phospho-alpha-D-ribose 1-diphosphate: step 1/9. In terms of biological role, required for the first step of histidine biosynthesis. May allow the feedback regulation of ATP phosphoribosyltransferase activity by histidine. This Rhizobium johnstonii (strain DSM 114642 / LMG 32736 / 3841) (Rhizobium leguminosarum bv. viciae) protein is ATP phosphoribosyltransferase regulatory subunit.